A 339-amino-acid polypeptide reads, in one-letter code: Biotin synthase (339 aa).

Residues 53-271 (NAIQMSRLLS…IALARILMPR (219 aa)) enclose the Radical SAM core domain. 3 residues coordinate [4Fe-4S] cluster: cysteine 68, cysteine 72, and cysteine 75. Residues cysteine 112, cysteine 143, cysteine 203, and arginine 275 each contribute to the [2Fe-2S] cluster site.

It belongs to the radical SAM superfamily. Biotin synthase family. As to quaternary structure, homodimer. It depends on [4Fe-4S] cluster as a cofactor. Requires [2Fe-2S] cluster as cofactor.

The catalysed reaction is (4R,5S)-dethiobiotin + (sulfur carrier)-SH + 2 reduced [2Fe-2S]-[ferredoxin] + 2 S-adenosyl-L-methionine = (sulfur carrier)-H + biotin + 2 5'-deoxyadenosine + 2 L-methionine + 2 oxidized [2Fe-2S]-[ferredoxin]. It participates in cofactor biosynthesis; biotin biosynthesis; biotin from 7,8-diaminononanoate: step 2/2. Functionally, catalyzes the conversion of dethiobiotin (DTB) to biotin by the insertion of a sulfur atom into dethiobiotin via a radical-based mechanism. This is Biotin synthase from Agrobacterium fabrum (strain C58 / ATCC 33970) (Agrobacterium tumefaciens (strain C58)).